A 1439-amino-acid chain; its full sequence is Histone-lysine N-methyltransferase NSD3 (1439 aa).

Residues 121 to 151 form a disordered region; that stretch reads PHEILEKPSPPQPPPPPSVPQTVIPKKTGSP. The segment covering 128 to 139 has biased composition (pro residues); sequence PSPPQPPPPPSV. A Phosphoserine modification is found at Ser-150. The short motif at 154 to 157 is the KIKL element; the sequence is KLKI. Residues 181–247 form a disordered region; the sequence is QASEHTKSKH…PREEPVLKEA (67 aa). Over residues 187-201 the composition is skewed to basic residues; sequence KSKHESRKEKRKKSN. Positions 202-244 are enriched in basic and acidic residues; sequence RHESSRSEERRSHKIPKLEPEGQNRPNERVDTAPEKPREEPVL. Residues Lys-218 and Lys-245 each participate in a glycyl lysine isopeptide (Lys-Gly) (interchain with G-Cter in SUMO2) cross-link. Residues 270 to 333 enclose the PWWP 1 domain; the sequence is VGDLVWSKVG…EKRVREYKGH (64 aa). Disordered regions lie at residues 344–367 and 401–466; these read AKQA…ERAQ and EASS…PPPV. 2 stretches are compositionally biased toward polar residues: residues 401-413 and 425-445; these read EASS…VTSK and VLNS…QSST. Lys-413 participates in a covalent cross-link: Glycyl lysine isopeptide (Lys-Gly) (interchain with G-Cter in SUMO2). Ser-457 carries the phosphoserine modification. Residues Lys-502 and Lys-532 each participate in a glycyl lysine isopeptide (Lys-Gly) (interchain with G-Cter in SUMO2) cross-link. A disordered region spans residues 540-695; the sequence is QDRLIISSPS…VDSSLSRRGV (156 aa). The span at 546-568 shows a compositional bias: polar residues; sequence SSPSQRSEKPAQSASSPEATSGS. Residues 583-595 show a composition bias toward basic and acidic residues; sequence TRSESEKSAEVVP. 3 positions are modified to phosphoserine: Ser-585, Ser-587, and Ser-590. Lys-628 participates in a covalent cross-link: Glycyl lysine isopeptide (Lys-Gly) (interchain with G-Cter in SUMO2). The segment covering 637–648 has biased composition (polar residues); sequence STDVETASCTYR. At Ser-655 the chain carries Phosphoserine. Residues 670-691 show a composition bias toward low complexity; sequence DSPSATADADASDAQSVDSSLS. 3 consecutive PHD-type zinc fingers follow at residues 701 to 748, 749 to 805, and 862 to 955; these read DTVC…CETG, QHPC…CSME, and VGFC…CKAG. N6-acetyllysine is present on Lys-790. Residues 960–1025 form the PWWP 2 domain; that stretch reads YKQIVWVKLG…QGRVFPYVEG (66 aa). Residues 1036-1065 are a coiled coil; it reads INKTFKKALEEAAKRFQELKAQRESKEALE. The AWS domain occupies 1096–1146; the sequence is SEIPRCNCKPGDENPCGLESQCLNRMSQYECHPQVCPAGDRCQNQCFTKRL. The SET domain maps to 1148 to 1265; that stretch reads PDAEVIKTER…AGMELTFNYN (118 aa). Lys-1154 is covalently cross-linked (Glycyl lysine isopeptide (Lys-Gly) (interchain with G-Cter in SUMO2)). The region spanning 1272 to 1288 is the Post-SET domain; it reads GRTVCHCGADNCSGFLG. The PHD-type 4; atypical zinc finger occupies 1323–1370; sequence EDYCFQCGDGGELVMCDKKDCPKAYHLLCLNLTQPPHGKWECPWHRCD.

Belongs to the class V-like SAM-binding methyltransferase superfamily. Histone-lysine methyltransferase family. SET2 subfamily. In terms of assembly, interacts with BRD4. Interacts (via KIKL motif) with BRD3 (via NET domain).

It is found in the nucleus. It localises to the chromosome. The enzyme catalyses L-lysyl(4)-[histone H3] + 2 S-adenosyl-L-methionine = N(6),N(6)-dimethyl-L-lysyl(4)-[histone H3] + 2 S-adenosyl-L-homocysteine + 2 H(+). It carries out the reaction L-lysyl(27)-[histone H3] + 2 S-adenosyl-L-methionine = N(6),N(6)-dimethyl-L-lysyl(27)-[histone H3] + 2 S-adenosyl-L-homocysteine + 2 H(+). In terms of biological role, histone methyltransferase. Preferentially dimethylates 'Lys-4' and 'Lys-27' of histone H3 forming H3K4me2 and H3K27me2. H3 'Lys-4' methylation represents a specific tag for epigenetic transcriptional activation, while 'Lys-27' is a mark for transcriptional repression. The sequence is that of Histone-lysine N-methyltransferase NSD3 (Nsd3) from Mus musculus (Mouse).